The following is a 448-amino-acid chain: NADP-specific glutamate dehydrogenase (448 aa).

Substrate contacts are provided by lysine 88, glutamine 109, and lysine 112. The Proton donor role is filled by lysine 124. Glycine 163 lines the substrate pocket. Threonine 207 and asparagine 238 together coordinate NADP(+). Serine 381 lines the substrate pocket.

Belongs to the Glu/Leu/Phe/Val dehydrogenases family. In terms of assembly, homohexamer.

It catalyses the reaction L-glutamate + NADP(+) + H2O = 2-oxoglutarate + NH4(+) + NADPH + H(+). Catalyzes the reversible oxidative deamination of glutamate to alpha-ketoglutarate and ammonia. The polypeptide is NADP-specific glutamate dehydrogenase (gdhA) (Helicobacter pylori (strain J99 / ATCC 700824) (Campylobacter pylori J99)).